The following is a 110-amino-acid chain: NADH-quinone oxidoreductase subunit K (110 aa).

The next 3 helical transmembrane spans lie at Leu-7 to Val-27, Ile-31 to Ala-51, and Ile-73 to Ile-93.

It belongs to the complex I subunit 4L family. NDH-1 is composed of 14 different subunits. Subunits NuoA, H, J, K, L, M, N constitute the membrane sector of the complex.

It is found in the cell membrane. The catalysed reaction is a quinone + NADH + 5 H(+)(in) = a quinol + NAD(+) + 4 H(+)(out). Functionally, NDH-1 shuttles electrons from NADH, via FMN and iron-sulfur (Fe-S) centers, to quinones in the respiratory chain. The immediate electron acceptor for the enzyme in this species is believed to be a menaquinone. Couples the redox reaction to proton translocation (for every two electrons transferred, four hydrogen ions are translocated across the cytoplasmic membrane), and thus conserves the redox energy in a proton gradient. This chain is NADH-quinone oxidoreductase subunit K, found in Desulfitobacterium hafniense (strain DSM 10664 / DCB-2).